Consider the following 488-residue polypeptide: Histone deacetylase 2 (488 aa).

The histone deacetylase stretch occupies residues 9–322 (KKKVCYYYDG…WTYETAVALD (314 aa)). Residues Gly-28 and Lys-32 each contribute to the 1D-myo-inositol 1,4,5,6-tetrakisphosphate site. N6-acetyllysine; alternate is present on Lys-75. A Glycyl lysine isopeptide (Lys-Gly) (interchain with G-Cter in SUMO2); alternate cross-link involves residue Lys-75. His-142 is an active-site residue. Asp-175, Asp-177, His-179, Phe-188, Thr-191, Val-194, Ser-198, and Phe-199 together coordinate Ca(2+). 2 residues coordinate Zn(2+): Asp-177 and His-179. N6-acetyllysine is present on Lys-221. Residue Tyr-223 coordinates Ca(2+). Residue Cys-262 is modified to S-nitrosocysteine. Asp-265 lines the Zn(2+) pocket. Arg-271 lines the 1D-myo-inositol 1,4,5,6-tetrakisphosphate pocket. Cys-274 carries the S-nitrosocysteine modification. The segment at 389-488 (AVHEDSGDED…GAKSEQLSNP (100 aa)) is disordered. A phosphoserine mark is found at Ser-394, Ser-407, Ser-422, and Ser-424. Basic and acidic residues predominate over residues 402–417 (PDKRISIRASDKRIAC). Over residues 418 to 428 (DEEFSDSEDEG) the composition is skewed to acidic residues. Over residues 429–481 (EGGRRNVADHKKGAKKARIEEDKKETEDKKTDVKEEDKSKDNSGEKTDPKGAK) the composition is skewed to basic and acidic residues. Glycyl lysine isopeptide (Lys-Gly) (interchain with G-Cter in SUMO2) cross-links involve residues Lys-439, Lys-452, Lys-458, Lys-462, Lys-478, and Lys-481.

Belongs to the histone deacetylase family. HD type 1 subfamily. As to quaternary structure, part of the core histone deacetylase (HDAC) complex composed of HDAC1, HDAC2, RBBP4 and RBBP7, the core complex associates with SIN3, SAP18 and SAP30 to form the SIN3 HDAC complex. Component of the nucleosome remodeling and deacetylase (NuRD) repressor complex, composed of core proteins MTA1, MTA2, MTA3, RBBP4, RBBP7, HDAC1, HDAC2, MBD2, MBD3, and peripherally associated proteins CDK2AP1, CDK2AP2, GATAD2A, GATAD2B, CHD3, CHD4 and CHD5. The exact stoichiometry of the NuRD complex is unknown, and some subunits such as MBD2 and MBD3, GATAD2A and GATAD2B, and CHD3, CHD4 and CHD5 define mutually exclusive NuRD complexes. Component of a RCOR/GFI/KDM1A/HDAC complex. Component of a BHC histone deacetylase complex that contains HDAC1, HDAC2, HMG20B, KDM1A, RCOR1 and PHF21A. The BHC complex may also contain ZMYM2, ZNF217, ZMYM3, GSE1 and GTF2I. Part of a complex containing the core histones H2A, H2B, H3 and H4, DEK and unphosphorylated DAXX. Part of a complex containing ATR and CHD4. Forms a heterologous complex at least with YY1. Interacts in the late S-phase of DNA-replication with DNMT1 in the other transcriptional repressor complex composed of DNMT1, DMAP1, PCNA, CAF1. Component of a mSin3A corepressor complex that contains SIN3A, SAP130, SUDS3, ARID4B, HDAC1 and HDAC2. Part of a complex composed of TRIM28, HDAC1, HDAC2 and EHMT2. Part of a complex containing at least CDYL, MIER1, MIER2, HDAC1 and HDAC2. Component of a histone deacetylase complex containing DNTTIP1, ZNF541, HDAC1 and HDAC2. Forms a complex comprising APPL1, RUVBL2, APPL2, CTNNB1 and HDAC1. Interacts directly with GFI1. Interacts directly with GFI1B. Interacts with APEX1; the interaction is not dependent on the acetylated status of APEX1. Interacts with ATR. Interacts with BCL6 (non-acetylated form). Interacts with BEND3. Interacts with CBFA2T3. Interacts with CDK2AP1. Interacts with CHD4. Interacts with CHD5. Interacts with CHFR. Interacts with CRY1. Interacts with DNMT1. Interacts with GATAD2A. Interacts with HCFC1. Interacts with HDAC7. Interacts with HDAC10. Interacts with INSM1. Interacts with KDM4A. Interacts with MACROH2A1 (via the non-histone region). Interacts with MBD3L2. Interacts with MTA1, with a preference for sumoylated MTA1. Interacts with NACC2. Interacts with NRIP1. Interacts with PELP1. Interacts with PIMREG. Interacts with PRDM6. Interacts with PWWP2B Interacts with SAP30. Interacts with SAP30L. Interacts with SETDB1. Interacts with SIX3. Interacts with SMARCAD1. Interacts with SNW1. Interacts with SPHK2. Interacts with SPEN/MINT. Interacts (CK2 phosphorylated form) with SP3. Interacts with SUV39H1. Interacts with TSHZ3 (via its N-terminus). Interacts with ZMYND8. Interacts with ZNF431. Interacts with ZNF263; recruited to the SIX3 promoter along with other proteins involved in chromatin modification and transcriptional corepression where it contributes to transcriptional repression. Identified in a complex with HDAC1, KCTD19, DNTTIP1 and ZNF541. Component of the SIN3B complex, which includes SIN3B, HDAC2, PHF12 and MORF4L1; interacts directly with all subunits. The cofactor is Zn(2+). It depends on Ca(2+) as a cofactor. S-nitrosylated by GAPDH. In neurons, S-nitrosylation at Cys-262 and Cys-274 does not affect enzyme activity, but induces HDAC2 release from chromatin. This in turn increases acetylation of histones surrounding neurotrophin-dependent gene promoters and promotes their transcription. In embryonic cortical neurons, S-Nitrosylation regulates dendritic growth and branching.

Its subcellular location is the nucleus. It localises to the cytoplasm. It carries out the reaction N(6)-acetyl-L-lysyl-[histone] + H2O = L-lysyl-[histone] + acetate. The enzyme catalyses N(6)-acetyl-L-lysyl-[protein] + H2O = L-lysyl-[protein] + acetate. It catalyses the reaction N(6)-(2E)-butenoyl-L-lysyl-[protein] + H2O = (2E)-2-butenoate + L-lysyl-[protein]. The catalysed reaction is N(6)-(2-hydroxyisobutanoyl)-L-lysyl-[protein] + H2O = 2-hydroxy-2-methylpropanoate + L-lysyl-[protein]. It carries out the reaction N(6)-[(S)-lactoyl]-L-lysyl-[protein] + H2O = (S)-lactate + L-lysyl-[protein]. With respect to regulation, inositol tetraphosphate (1D-myo-inositol 1,4,5,6-tetrakisphosphate) may act as an intermolecular glue between HDAC2 and N-Cor repressor complex components. Functionally, histone deacetylase that catalyzes the deacetylation of lysine residues on the N-terminal part of the core histones (H2A, H2B, H3 and H4). Histone deacetylation gives a tag for epigenetic repression and plays an important role in transcriptional regulation, cell cycle progression and developmental events. Histone deacetylases act via the formation of large multiprotein complexes. Forms transcriptional repressor complexes by associating with MAD, SIN3, YY1 and N-COR. Component of a RCOR/GFI/KDM1A/HDAC complex that suppresses, via histone deacetylase (HDAC) recruitment, a number of genes implicated in multilineage blood cell development. Acts as a component of the histone deacetylase NuRD complex which participates in the remodeling of chromatin. Component of the SIN3B complex that represses transcription and counteracts the histone acetyltransferase activity of EP300 through the recognition H3K27ac marks by PHF12 and the activity of the histone deacetylase HDAC2. Also deacetylates non-histone targets: deacetylates TSHZ3, thereby regulating its transcriptional repressor activity. May be involved in the transcriptional repression of circadian target genes, such as PER1, mediated by CRY1 through histone deacetylation. Involved in MTA1-mediated transcriptional corepression of TFF1 and CDKN1A. In addition to protein deacetylase activity, also acts as a protein-lysine deacylase by recognizing other acyl groups: catalyzes removal of (2E)-butenoyl (crotonyl), lactoyl (lactyl) and 2-hydroxyisobutanoyl (2-hydroxyisobutyryl) acyl groups from lysine residues, leading to protein decrotonylation, delactylation and de-2-hydroxyisobutyrylation, respectively. The protein is Histone deacetylase 2 of Mus musculus (Mouse).